Reading from the N-terminus, the 360-residue chain is 3-dehydroquinate synthase (360 aa).

NAD(+) contacts are provided by residues 72–77, 106–110, 130–131, lysine 143, and lysine 152; these read DGEEYK, GVIGD, and TT. 3 residues coordinate Zn(2+): glutamate 185, histidine 248, and histidine 265.

This sequence belongs to the sugar phosphate cyclases superfamily. Dehydroquinate synthase family. Requires Co(2+) as cofactor. Zn(2+) serves as cofactor. It depends on NAD(+) as a cofactor.

The protein resides in the cytoplasm. It carries out the reaction 7-phospho-2-dehydro-3-deoxy-D-arabino-heptonate = 3-dehydroquinate + phosphate. It functions in the pathway metabolic intermediate biosynthesis; chorismate biosynthesis; chorismate from D-erythrose 4-phosphate and phosphoenolpyruvate: step 2/7. In terms of biological role, catalyzes the conversion of 3-deoxy-D-arabino-heptulosonate 7-phosphate (DAHP) to dehydroquinate (DHQ). The chain is 3-dehydroquinate synthase from Geotalea uraniireducens (strain Rf4) (Geobacter uraniireducens).